The chain runs to 511 residues: GMP synthase [glutamine-hydrolyzing] (511 aa).

The 191-residue stretch at 5–195 (DILVLDFGSQ…AKYACNCDSV (191 aa)) folds into the Glutamine amidotransferase type-1 domain. The active-site Nucleophile is the C82. Active-site residues include H169 and E171. Residues 196–386 (WNMGSFAKTQ…LGLSKDVVYR (191 aa)) enclose the GMPS ATP-PPase domain. 223–229 (SGGVDSS) is an ATP binding site.

In terms of assembly, homodimer.

It carries out the reaction XMP + L-glutamine + ATP + H2O = GMP + L-glutamate + AMP + diphosphate + 2 H(+). The protein operates within purine metabolism; GMP biosynthesis; GMP from XMP (L-Gln route): step 1/1. Catalyzes the synthesis of GMP from XMP. The protein is GMP synthase [glutamine-hydrolyzing] of Campylobacter lari (strain RM2100 / D67 / ATCC BAA-1060).